The sequence spans 618 residues: DNA mismatch repair protein MutL (618 aa).

The interval 367–402 is disordered; it reads EPTTAREPATPRYSGGASGGNGGRQTAGGWPHAQPG. Residues 382 to 392 are compositionally biased toward gly residues; the sequence is GASGGNGGRQT.

Belongs to the DNA mismatch repair MutL/HexB family.

In terms of biological role, this protein is involved in the repair of mismatches in DNA. It is required for dam-dependent methyl-directed DNA mismatch repair. May act as a 'molecular matchmaker', a protein that promotes the formation of a stable complex between two or more DNA-binding proteins in an ATP-dependent manner without itself being part of a final effector complex. The protein is DNA mismatch repair protein MutL of Salmonella paratyphi A (strain ATCC 9150 / SARB42).